Reading from the N-terminus, the 74-residue chain is Small ribosomal subunit protein eS17 (74 aa).

This sequence belongs to the eukaryotic ribosomal protein eS17 family.

This chain is Small ribosomal subunit protein eS17, found in Aeropyrum pernix (strain ATCC 700893 / DSM 11879 / JCM 9820 / NBRC 100138 / K1).